The sequence spans 1297 residues: Probable bifunctional E2/E3 enzyme R795 (1297 aa).

An RING-type; atypical zinc finger spans residues 74–128; sequence CAICRYQENEPCIEHKSSESNTKCPIAQSVSCSHSFHACCISRWLHTKKTCPLCN. One can recognise a U-box domain in the interval 678 to 750; it reads EPLQEFLCPI…RDWKENNTVI (73 aa). Residues 899-1082 form the VWFA domain; sequence EMTLEIHSSN…LDIMELETMI (184 aa). The UBC core domain maps to 1133-1279; the sequence is QKLIRVQREI…IIDYVNKFAL (147 aa). Cysteine 1217 (glycyl thioester intermediate) is an active-site residue.

In the C-terminal section; belongs to the ubiquitin-conjugating enzyme family.

The enzyme catalyses S-ubiquitinyl-[E2 ubiquitin-conjugating enzyme]-L-cysteine + [acceptor protein]-L-lysine = [E2 ubiquitin-conjugating enzyme]-L-cysteine + N(6)-ubiquitinyl-[acceptor protein]-L-lysine.. It carries out the reaction S-ubiquitinyl-[E1 ubiquitin-activating enzyme]-L-cysteine + [E2 ubiquitin-conjugating enzyme]-L-cysteine = [E1 ubiquitin-activating enzyme]-L-cysteine + S-ubiquitinyl-[E2 ubiquitin-conjugating enzyme]-L-cysteine.. The protein operates within protein modification; protein ubiquitination. Its function is as follows. Catalyzes the covalent attachment of ubiquitin to other proteins. Also acts as an E3 ubiquitin-protein ligase. The sequence is that of Probable bifunctional E2/E3 enzyme R795 from Acanthamoeba polyphaga (Amoeba).